We begin with the raw amino-acid sequence, 338 residues long: Ketol-acid reductoisomerase (NADP(+)) (338 aa).

The KARI N-terminal Rossmann domain maps to 1-181 (MKVYYDKDCD…GGGRTGIIET (181 aa)). NADP(+)-binding positions include 24-27 (YGSQ), R47, S50, T52, and 82-85 (DEFQ). The active site involves H107. Residue G133 participates in NADP(+) binding. In terms of domain architecture, KARI C-terminal knotted spans 182–327 (TFKDETETDL…EQLRSMMPWI (146 aa)). D190, E194, E226, and E230 together coordinate Mg(2+). S251 provides a ligand contact to substrate.

Belongs to the ketol-acid reductoisomerase family. The cofactor is Mg(2+).

It carries out the reaction (2R)-2,3-dihydroxy-3-methylbutanoate + NADP(+) = (2S)-2-acetolactate + NADPH + H(+). The catalysed reaction is (2R,3R)-2,3-dihydroxy-3-methylpentanoate + NADP(+) = (S)-2-ethyl-2-hydroxy-3-oxobutanoate + NADPH + H(+). It functions in the pathway amino-acid biosynthesis; L-isoleucine biosynthesis; L-isoleucine from 2-oxobutanoate: step 2/4. The protein operates within amino-acid biosynthesis; L-valine biosynthesis; L-valine from pyruvate: step 2/4. Functionally, involved in the biosynthesis of branched-chain amino acids (BCAA). Catalyzes an alkyl-migration followed by a ketol-acid reduction of (S)-2-acetolactate (S2AL) to yield (R)-2,3-dihydroxy-isovalerate. In the isomerase reaction, S2AL is rearranged via a Mg-dependent methyl migration to produce 3-hydroxy-3-methyl-2-ketobutyrate (HMKB). In the reductase reaction, this 2-ketoacid undergoes a metal-dependent reduction by NADPH to yield (R)-2,3-dihydroxy-isovalerate. In Pseudomonas fluorescens (strain SBW25), this protein is Ketol-acid reductoisomerase (NADP(+)).